The chain runs to 492 residues: N-succinylglutamate 5-semialdehyde dehydrogenase (492 aa).

220-225 (GSASTG) is a binding site for NAD(+). Catalysis depends on residues Glu243 and Cys277.

The protein belongs to the aldehyde dehydrogenase family. AstD subfamily.

The enzyme catalyses N-succinyl-L-glutamate 5-semialdehyde + NAD(+) + H2O = N-succinyl-L-glutamate + NADH + 2 H(+). The protein operates within amino-acid degradation; L-arginine degradation via AST pathway; L-glutamate and succinate from L-arginine: step 4/5. In terms of biological role, catalyzes the NAD-dependent reduction of succinylglutamate semialdehyde into succinylglutamate. This chain is N-succinylglutamate 5-semialdehyde dehydrogenase, found in Salmonella agona (strain SL483).